A 752-amino-acid chain; its full sequence is Double zinc ribbon and ankyrin repeat-containing protein 1 (752 aa).

S160 and S182 each carry phosphoserine. Residues 164-187 (IPAYGGGSGSRPPTRQSQSPGFAH) form a disordered region. Polar residues predominate over residues 174–183 (RPPTRQSQSP). 2 DZANK-type zinc fingers span residues 211 to 270 (CAHC…CVVC) and 339 to 387 (CYRC…GSCG). 2 ANK repeats span residues 605–636 (ENRL…DPNC) and 640–669 (DNRP…DIDQ).

In terms of assembly, interacts with NINL isoform 2. Associates with DYNC1H1 and multiple dynein intermediate and light chains as well as actin-binding proteins.

It is found in the cytoplasm. It localises to the cytoskeleton. The protein resides in the microtubule organizing center. The protein localises to the centrosome. Its subcellular location is the cilium basal body. Its function is as follows. Involved in vesicle transport in photoreceptor cells. The chain is Double zinc ribbon and ankyrin repeat-containing protein 1 from Homo sapiens (Human).